The chain runs to 102 residues: Small ribosomal subunit protein uS14 (102 aa).

This sequence belongs to the universal ribosomal protein uS14 family. As to quaternary structure, part of the 30S ribosomal subunit. Contacts proteins S3 and S10.

Binds 16S rRNA, required for the assembly of 30S particles and may also be responsible for determining the conformation of the 16S rRNA at the A site. The polypeptide is Small ribosomal subunit protein uS14 (Wolbachia pipientis wMel).